A 347-amino-acid polypeptide reads, in one-letter code: SUMO-activating enzyme subunit 1 (347 aa).

This sequence belongs to the ubiquitin-activating E1 family. In terms of assembly, heterodimer of sae1 and uba2/sae2. The heterodimer corresponds to the two domains that are encoded on a single polypeptide chain in ubiquitin-activating enzyme E1. Interacts with ube2i.

It is found in the nucleus. It functions in the pathway protein modification; protein sumoylation. Functionally, the heterodimer acts as an E1 ligase for sumo1, sumo2, and sumo3. It mediates ATP-dependent activation of sumo proteins followed by formation of a thioester bond between a sumo protein and a conserved active site cysteine residue on uba2/sae2. The polypeptide is SUMO-activating enzyme subunit 1 (sae1) (Xenopus tropicalis (Western clawed frog)).